A 239-amino-acid chain; its full sequence is Ribosomal RNA small subunit methyltransferase G (239 aa).

Residues Gly-77, Phe-82, 128-129 (AE), and Arg-147 each bind S-adenosyl-L-methionine.

The protein belongs to the methyltransferase superfamily. RNA methyltransferase RsmG family.

The protein resides in the cytoplasm. Its function is as follows. Specifically methylates the N7 position of guanine in position 535 of 16S rRNA. The polypeptide is Ribosomal RNA small subunit methyltransferase G (Bacillus mycoides (strain KBAB4) (Bacillus weihenstephanensis)).